Consider the following 384-residue polypeptide: Galactokinase (384 aa).

Glu34–Asp37 lines the substrate pocket. Ser123 to Ser129 contacts ATP. Residues Ser129 and Glu161 each coordinate Mg(2+). Asp173 serves as the catalytic Proton acceptor. Substrate is bound at residue Tyr222.

Belongs to the GHMP kinase family. GalK subfamily.

The protein localises to the cytoplasm. The catalysed reaction is alpha-D-galactose + ATP = alpha-D-galactose 1-phosphate + ADP + H(+). It functions in the pathway carbohydrate metabolism; galactose metabolism. Catalyzes the transfer of the gamma-phosphate of ATP to D-galactose to form alpha-D-galactose-1-phosphate (Gal-1-P). The chain is Galactokinase from Haemophilus influenzae (strain PittGG).